The sequence spans 93 residues: N-myc protein (93 aa).

Efficient DNA binding requires dimerization with another bHLH protein. Binds DNA as a heterodimer with MAX. Barely detectable in most tissues assayed.

It localises to the nucleus. May function as a transcription factor. The chain is N-myc protein (mycn) from Danio rerio (Zebrafish).